The primary structure comprises 241 residues: 2-C-methyl-D-erythritol 4-phosphate cytidylyltransferase (241 aa).

It belongs to the IspD/TarI cytidylyltransferase family. IspD subfamily. In terms of assembly, homodimer.

The catalysed reaction is 2-C-methyl-D-erythritol 4-phosphate + CTP + H(+) = 4-CDP-2-C-methyl-D-erythritol + diphosphate. The protein operates within isoprenoid biosynthesis; isopentenyl diphosphate biosynthesis via DXP pathway; isopentenyl diphosphate from 1-deoxy-D-xylulose 5-phosphate: step 2/6. In terms of biological role, catalyzes the formation of 4-diphosphocytidyl-2-C-methyl-D-erythritol from CTP and 2-C-methyl-D-erythritol 4-phosphate (MEP). The protein is 2-C-methyl-D-erythritol 4-phosphate cytidylyltransferase of Yersinia pseudotuberculosis serotype I (strain IP32953).